The following is a 264-amino-acid chain: Thymidylate synthase (264 aa).

Arg21 contributes to the dUMP binding site. Position 51 (His51) interacts with (6R)-5,10-methylene-5,6,7,8-tetrahydrofolate. 126–127 serves as a coordination point for dUMP; the sequence is RR. Residue Cys146 is the Nucleophile of the active site. DUMP-binding positions include 166–169, Asn177, and 207–209; these read RSCD and HLY. Asp169 is a binding site for (6R)-5,10-methylene-5,6,7,8-tetrahydrofolate. A (6R)-5,10-methylene-5,6,7,8-tetrahydrofolate-binding site is contributed by Ala263.

Belongs to the thymidylate synthase family. Bacterial-type ThyA subfamily. As to quaternary structure, homodimer.

Its subcellular location is the cytoplasm. It catalyses the reaction dUMP + (6R)-5,10-methylene-5,6,7,8-tetrahydrofolate = 7,8-dihydrofolate + dTMP. Its pathway is pyrimidine metabolism; dTTP biosynthesis. Functionally, catalyzes the reductive methylation of 2'-deoxyuridine-5'-monophosphate (dUMP) to 2'-deoxythymidine-5'-monophosphate (dTMP) while utilizing 5,10-methylenetetrahydrofolate (mTHF) as the methyl donor and reductant in the reaction, yielding dihydrofolate (DHF) as a by-product. This enzymatic reaction provides an intracellular de novo source of dTMP, an essential precursor for DNA biosynthesis. In Baumannia cicadellinicola subsp. Homalodisca coagulata, this protein is Thymidylate synthase.